Here is a 613-residue protein sequence, read N- to C-terminus: DNA mismatch repair protein MutL (613 aa).

It belongs to the DNA mismatch repair MutL/HexB family.

Functionally, this protein is involved in the repair of mismatches in DNA. It is required for dam-dependent methyl-directed DNA mismatch repair. May act as a 'molecular matchmaker', a protein that promotes the formation of a stable complex between two or more DNA-binding proteins in an ATP-dependent manner without itself being part of a final effector complex. The sequence is that of DNA mismatch repair protein MutL from Flavobacterium psychrophilum (strain ATCC 49511 / DSM 21280 / CIP 103535 / JIP02/86).